Reading from the N-terminus, the 302-residue chain is L-threonate dehydrogenase (302 aa).

NAD(+) contacts are provided by residues phenylalanine 7 to alanine 35 and threonine 102. The active site involves lysine 178. Lysine 246 is an NAD(+) binding site.

It belongs to the HIBADH-related family. L-threonate dehydrogenase subfamily.

The enzyme catalyses L-threonate + NAD(+) = 2-dehydro-L-erythronate + NADH + H(+). Its function is as follows. Catalyzes oxidation of L-threonate to 2-oxo-tetronate. Can use either NAD(+) or NADP(+) as cosubstrate, with a preference for NAD(+). This is L-threonate dehydrogenase from Escherichia coli (strain K12).